The following is a 172-amino-acid chain: Small ribosomal subunit protein uS5 (172 aa).

The 64-residue stretch at 17-80 (MREKMIAVNR…EEARRKMIKV (64 aa)) folds into the S5 DRBM domain.

It belongs to the universal ribosomal protein uS5 family. In terms of assembly, part of the 30S ribosomal subunit. Contacts proteins S4 and S8.

In terms of biological role, with S4 and S12 plays an important role in translational accuracy. Its function is as follows. Located at the back of the 30S subunit body where it stabilizes the conformation of the head with respect to the body. This Janthinobacterium sp. (strain Marseille) (Minibacterium massiliensis) protein is Small ribosomal subunit protein uS5.